Reading from the N-terminus, the 194-residue chain is Small ribosomal subunit protein uS5 (194 aa).

The S5 DRBM domain occupies 26 to 89; that stretch reads LEEKVVEIRR…ADAKKHLIRV (64 aa).

Belongs to the universal ribosomal protein uS5 family. Part of the 30S ribosomal subunit. Contacts proteins S4 and S8.

Functionally, with S4 and S12 plays an important role in translational accuracy. Its function is as follows. Located at the back of the 30S subunit body where it stabilizes the conformation of the head with respect to the body. The sequence is that of Small ribosomal subunit protein uS5 from Persephonella marina (strain DSM 14350 / EX-H1).